The primary structure comprises 873 residues: DNA mismatch repair protein MutS (873 aa).

Residue 625 to 632 coordinates ATP; that stretch reads GPNMGGKS.

The protein belongs to the DNA mismatch repair MutS family.

In terms of biological role, this protein is involved in the repair of mismatches in DNA. It is possible that it carries out the mismatch recognition step. This protein has a weak ATPase activity. The protein is DNA mismatch repair protein MutS of Xanthomonas oryzae pv. oryzae (strain KACC10331 / KXO85).